The following is a 97-amino-acid chain: Sec-independent protein translocase protein TatA (97 aa).

A helical transmembrane segment spans residues 1 to 21 (MGFNIWSLLIILLIVALLFGT). A disordered region spans residues 28–97 (GGDLGGAIRG…SAEHHDRSTS (70 aa)). Over residues 37 to 56 (GFKESMREGEEEEAQKRADG) the composition is skewed to basic and acidic residues. A compositionally biased stretch (low complexity) spans 78–87 (QARESSSARQ). Basic and acidic residues predominate over residues 88–97 (SAEHHDRSTS).

It belongs to the TatA/E family. In terms of assembly, the Tat system comprises two distinct complexes: a TatABC complex, containing multiple copies of TatA, TatB and TatC subunits, and a separate TatA complex, containing only TatA subunits. Substrates initially bind to the TatABC complex, which probably triggers association of the separate TatA complex to form the active translocon.

Its subcellular location is the cell inner membrane. Its function is as follows. Part of the twin-arginine translocation (Tat) system that transports large folded proteins containing a characteristic twin-arginine motif in their signal peptide across membranes. TatA could form the protein-conducting channel of the Tat system. The polypeptide is Sec-independent protein translocase protein TatA (Halorhodospira halophila (strain DSM 244 / SL1) (Ectothiorhodospira halophila (strain DSM 244 / SL1))).